Here is a 388-residue protein sequence, read N- to C-terminus: Protein TsgA homolog (388 aa).

Helical transmembrane passes span 12–32, 51–71, 77–97, 102–122, 137–157, 163–183, 203–223, 246–266, 272–292, 294–314, 331–351, and 356–376; these read CISF…GIFL, TFLN…TNII, LIFG…SHNL, ISMF…TYII, LTDS…ALII, WYWV…ITIN, FSIL…LSFI, SAFW…LKFF, IITL…FYDY, LLYI…TIII, YILT…GPIV, and IFSA…LVII.

The protein belongs to the major facilitator superfamily. TsgA family.

The protein resides in the cell membrane. In Buchnera aphidicola subsp. Baizongia pistaciae (strain Bp), this protein is Protein TsgA homolog.